The primary structure comprises 706 residues: Elongation factor G (706 aa).

Positions 12-288 constitute a tr-type G domain; it reads EKTRNIGIMA…GVTNYLPSPN (277 aa). Residues 21 to 28, 85 to 89, and 139 to 142 each bind GTP; these read AHIDAGKT, DTPGH, and NKMD. A disordered region spans residues 288 to 309; that stretch reads NDVPAITGHHPQDKEEDITRHP. The span at 297 to 309 shows a compositional bias: basic and acidic residues; it reads HPQDKEEDITRHP.

Belongs to the TRAFAC class translation factor GTPase superfamily. Classic translation factor GTPase family. EF-G/EF-2 subfamily.

The protein localises to the cytoplasm. Functionally, catalyzes the GTP-dependent ribosomal translocation step during translation elongation. During this step, the ribosome changes from the pre-translocational (PRE) to the post-translocational (POST) state as the newly formed A-site-bound peptidyl-tRNA and P-site-bound deacylated tRNA move to the P and E sites, respectively. Catalyzes the coordinated movement of the two tRNA molecules, the mRNA and conformational changes in the ribosome. In Salinibacter ruber (strain DSM 13855 / M31), this protein is Elongation factor G.